The sequence spans 308 residues: 2-dehydro-3-deoxy-phosphogluconate/2-dehydro-3-deoxy-6-phosphogalactonate aldolase (308 aa).

Residues 57–58, 144–146, and 169–171 contribute to the substrate site; these read TT, YNY, and KDT. Residue Lys169 is the Schiff-base intermediate with substrate of the active site.

This sequence belongs to the DapA family. KDPG aldolase subfamily. Homotetramer; dimer of dimers.

The enzyme catalyses 2-dehydro-3-deoxy-6-phospho-D-gluconate = D-glyceraldehyde 3-phosphate + pyruvate. It carries out the reaction 2-dehydro-3-deoxy-6-phospho-D-galactonate = D-glyceraldehyde 3-phosphate + pyruvate. It participates in carbohydrate acid metabolism; 2-dehydro-3-deoxy-D-gluconate degradation; D-glyceraldehyde 3-phosphate and pyruvate from 2-dehydro-3-deoxy-D-gluconate: step 2/2. Functionally, involved in the degradation of glucose and galactose via the Entner-Doudoroff pathway. Catalyzes the reversible cleavage of 2-keto-3-deoxy-6-phosphogluconate (KDPG) and 2-keto-3-deoxygluconate (KDG) forming pyruvate and glyceraldehyde 3-phosphate or glyceraldehyde, respectively. It is also able to catalyze the reversible cleavage of 2-keto-3-deoxy-6-phosphogalactonate (KDPGal) and 2-keto-3-deoxygalactonate (KDGal). The sequence is that of 2-dehydro-3-deoxy-phosphogluconate/2-dehydro-3-deoxy-6-phosphogalactonate aldolase (eda) from Saccharolobus solfataricus (strain ATCC 35092 / DSM 1617 / JCM 11322 / P2) (Sulfolobus solfataricus).